Reading from the N-terminus, the 355-residue chain is D-alanine--D-alanine ligase (355 aa).

The ATP-grasp domain maps to 143–350; that stretch reads KTIFSNLKIP…IEQLVAKLVD (208 aa). Position 178 to 233 (178 to 233) interacts with ATP; the sequence is IKKLNFPVFVKPSNSGSSLGISKVINKSALLKALEKAWEIDARILVEEGLETREIE. 3 residues coordinate Mg(2+): Asp303, Glu317, and Asn319.

This sequence belongs to the D-alanine--D-alanine ligase family. Mg(2+) is required as a cofactor. Requires Mn(2+) as cofactor.

Its subcellular location is the cytoplasm. It catalyses the reaction 2 D-alanine + ATP = D-alanyl-D-alanine + ADP + phosphate + H(+). It functions in the pathway cell wall biogenesis; peptidoglycan biosynthesis. Functionally, cell wall formation. In Prochlorococcus marinus (strain MIT 9312), this protein is D-alanine--D-alanine ligase.